The sequence spans 231 residues: Adenylate kinase (231 aa).

ATP is bound at residue 12-17; sequence GAGKGT. Residues 32 to 61 are NMP; it reads STGDMLRAAVKAKTPLGLEVKKIMESGGLV. Residues Thr33, Arg38, 59–61, 87–90, and Gln94 contribute to the AMP site; these read GLV and GFPR. Residues 124-161 are LID; that stretch reads GRLIHPASGRTYHRRYNPPKVADKDDVTGEPLIQRADD. Residues Arg125 and 134 to 135 each bind ATP; that span reads TY. Arg158 and Arg169 together coordinate AMP. Gly205 lines the ATP pocket.

It belongs to the adenylate kinase family. Monomer.

The protein resides in the cytoplasm. It catalyses the reaction AMP + ATP = 2 ADP. The protein operates within purine metabolism; AMP biosynthesis via salvage pathway; AMP from ADP: step 1/1. Functionally, catalyzes the reversible transfer of the terminal phosphate group between ATP and AMP. Plays an important role in cellular energy homeostasis and in adenine nucleotide metabolism. The polypeptide is Adenylate kinase (Coxiella burnetii (strain CbuK_Q154) (Coxiella burnetii (strain Q154))).